The following is a 794-amino-acid chain: Zinc finger protein 148 (794 aa).

Lysine 6 is covalently cross-linked (Glycyl lysine isopeptide (Lys-Gly) (interchain with G-Cter in SUMO2)). Serine 51 is modified (phosphoserine). Residues lysine 88, lysine 115, and lysine 132 each participate in a glycyl lysine isopeptide (Lys-Gly) (interchain with G-Cter in SUMO2) cross-link. The C2H2-type 1 zinc-finger motif lies at 171–193 (HVCEHCNAAFRTNYHLQRHVFIH). Threonine 194 carries the phosphothreonine modification. C2H2-type zinc fingers lie at residues 199 to 221 (FQCS…EKIH) and 227 to 249 (FRCD…KRTH). Serine 250 carries the phosphoserine modification. The segment at 255–278 (YQCEYCLQYFSRTDRVLKHKRMCH) adopts a C2H2-type 4 zinc-finger fold. Residue lysine 291 forms a Glycyl lysine isopeptide (Lys-Gly) (interchain with G-Cter in SUMO2) linkage. The interval 298-346 (EEDSGFSTSPKDNSLPKKKRQKPEKKSSGMDKESVLDKSDTKKDRNDYL) is disordered. Residues serine 301 and serine 306 each carry the phosphoserine modification. A Glycyl lysine isopeptide (Lys-Gly) (interchain with G-Cter in SUMO2) cross-link involves residue lysine 308. Positions 321 to 344 (EKKSSGMDKESVLDKSDTKKDRND) are enriched in basic and acidic residues. A Glycyl lysine isopeptide (Lys-Gly) (interchain with G-Cter in SUMO1); alternate cross-link involves residue lysine 356. Residue lysine 356 forms a Glycyl lysine isopeptide (Lys-Gly) (interchain with G-Cter in SUMO2); alternate linkage. Lysine 402 is covalently cross-linked (Glycyl lysine isopeptide (Lys-Gly) (interchain with G-Cter in SUMO2)). Serine 412 carries the post-translational modification Phosphoserine. Residues lysine 421 and lysine 424 each participate in a glycyl lysine isopeptide (Lys-Gly) (interchain with G-Cter in SUMO2) cross-link. Residues 574–588 (NSSDVPEVTQSENVG) are compositionally biased toward polar residues. The tract at residues 574 to 596 (NSSDVPEVTQSENVGSSSQASSS) is disordered. Lysine 607 is modified (N6-acetyllysine). 2 positions are modified to phosphoserine: serine 665 and serine 784.

Belongs to the krueppel C2H2-type zinc-finger protein family. Interacts with HNRNPDL. Interacts with the 5FMC complex; the interaction requires association with CHTOP. Interacts with CAVIN1. In terms of processing, sumoylated with SUMO2. Desumoylated by SENP3, resulting in the stimulation of transcription of its target genes. As to expression, expressed in heart, lung, kidney, skeletal muscle, liver, brain and spleen.

Its subcellular location is the nucleus. In terms of biological role, involved in transcriptional regulation. Represses the transcription of a number of genes including gastrin, stromelysin and enolase. Binds to the G-rich box in the enhancer region of these genes. This is Zinc finger protein 148 (Znf148) from Rattus norvegicus (Rat).